The chain runs to 519 residues: 2,3-bisphosphoglycerate-independent phosphoglycerate mutase (519 aa).

Mn(2+) is bound by residues aspartate 18 and serine 68. The Phosphoserine intermediate role is filled by serine 68. Substrate-binding positions include histidine 129, 159–160 (RD), arginine 191, arginine 197, 267–270 (RADR), and lysine 341. Residues aspartate 408, histidine 412, aspartate 449, histidine 450, and histidine 468 each contribute to the Mn(2+) site.

It belongs to the BPG-independent phosphoglycerate mutase family. In terms of assembly, monomer. Mn(2+) serves as cofactor.

It carries out the reaction (2R)-2-phosphoglycerate = (2R)-3-phosphoglycerate. It participates in carbohydrate degradation; glycolysis; pyruvate from D-glyceraldehyde 3-phosphate: step 3/5. Its function is as follows. Catalyzes the interconversion of 2-phosphoglycerate and 3-phosphoglycerate. The protein is 2,3-bisphosphoglycerate-independent phosphoglycerate mutase of Coxiella burnetii (strain RSA 331 / Henzerling II).